The chain runs to 328 residues: Delta-aminolevulinic acid dehydratase (328 aa).

K200 functions as the Schiff-base intermediate with substrate in the catalytic mechanism. Residues R210 and K222 each coordinate 5-aminolevulinate. Residue E238 participates in Mg(2+) binding. The active-site Schiff-base intermediate with substrate is the K253. Residues S279 and Y318 each contribute to the 5-aminolevulinate site.

It belongs to the ALAD family. As to quaternary structure, homooctamer.

It carries out the reaction 2 5-aminolevulinate = porphobilinogen + 2 H2O + H(+). Its pathway is porphyrin-containing compound metabolism; protoporphyrin-IX biosynthesis; coproporphyrinogen-III from 5-aminolevulinate: step 1/4. Its activity is regulated as follows. Stimulated by magnesium, inhibited by zinc. Catalyzes an early step in the biosynthesis of tetrapyrroles. Binds two molecules of 5-aminolevulinate per subunit, each at a distinct site, and catalyzes their condensation to form porphobilinogen. The chain is Delta-aminolevulinic acid dehydratase (hemB) from Chlorobaculum tepidum (strain ATCC 49652 / DSM 12025 / NBRC 103806 / TLS) (Chlorobium tepidum).